The sequence spans 434 residues: G2/mitotic-specific cyclin-2 (434 aa).

This sequence belongs to the cyclin family. Cyclin AB subfamily. As to quaternary structure, interacts with the CDC2 protein kinase to form a serine/threonine kinase holoenzyme complex also known as maturation promoting factor (MPF). The cyclin subunit imparts substrate specificity to the complex.

In terms of biological role, essential for the control of the cell cycle at the G2/M (mitosis) transition. The chain is G2/mitotic-specific cyclin-2 from Medicago sativa subsp. varia (Alfalfa).